The sequence spans 103 residues: Hexon-interlacing protein (103 aa).

Positions 25-45 (RQNVTGSDLGGKPVPSDVLES) are disordered. Residues 72–99 (LDDLKTQVAAMQNSVTAIQEELKDLKQR) are a coiled coil.

This sequence belongs to the adenoviridae hexon-interlacing protein family. As to quaternary structure, homotrimer. Interacts with hexon protein; this interaction tethers the hexons together. Self-interacts with adjacent proteins. Interacts with kinesin light chain KLC1; this interaction leads to capsid disruption at the nuclear pore complex during virus entry into host cell.

It localises to the virion. The protein localises to the host nucleus. Structural component of the virion that acts as a cement protein on the capsid exterior and forms triskelion structures consisting of three molecules that stabilize three hexon trimers at the center of each icosahedral facet and fixes the peripentonal hexons. Dispensable for assembly. During virus entry, recruits the anterograde motor kinesin-1 to the capsid docked at the nuclear pore complex thereby subjecting the docked capsid to a pulling force. The resulting tension leads to capsid disruption, dispersion of capsid fragments toward cell periphery and eventually viral DNA entry into the host nucleus. The sequence is that of Hexon-interlacing protein from Canine adenovirus serotype 1 (strain CLL) (CAdV-1).